Reading from the N-terminus, the 556-residue chain is Putative D-arabinono-1,4-lactone oxidase (556 aa).

Residues 47-217 enclose the FAD-binding PCMH-type domain; sequence FTSLPELYIQ…TEVTFKAVPA (171 aa). Histidine 84 bears the Pros-8alpha-FAD histidine mark.

It belongs to the oxygen-dependent FAD-linked oxidoreductase family. FAD is required as a cofactor.

It is found in the mitochondrion membrane. The catalysed reaction is D-arabinono-1,4-lactone + O2 = dehydro-D-arabinono-1,4-lactone + H2O2 + H(+). Its pathway is cofactor biosynthesis; D-erythroascorbate biosynthesis; dehydro-D-arabinono-1,4-lactone from D-arabinose: step 2/2. The polypeptide is Putative D-arabinono-1,4-lactone oxidase (alo-1) (Neurospora crassa (strain ATCC 24698 / 74-OR23-1A / CBS 708.71 / DSM 1257 / FGSC 987)).